The sequence spans 137 residues: Small ribosomal subunit protein uS9 (137 aa).

This sequence belongs to the universal ribosomal protein uS9 family.

This chain is Small ribosomal subunit protein uS9 (rps9), found in Saccharolobus solfataricus (strain ATCC 35092 / DSM 1617 / JCM 11322 / P2) (Sulfolobus solfataricus).